Consider the following 241-residue polypeptide: Endodeoxyribonuclease NucC (241 aa).

Residues D73, E104, and K106 contribute to the active site. Residues D73 and E104 each coordinate Mg(2+).

The protein belongs to the NucC endonuclease family. In terms of assembly, self-oligomerizes. Forms homotrimers; in the presence of cAAA the trimers associate face-to-face to form homohexamers. The 2 cAAA-binding sites are on the exterior of the hexamer at the three-way junction, there are maximally 2 cyclic nucleotides per hexamer. Mg(2+) is required as a cofactor.

Activated by cAAA and to a lesser extent cAA; both cyclic nucleotides are products of its cognate CD-NTase. Cyclic nucleotide binding causes hexamerization. Effector DNase of a CBASS antivirus system. CBASS (cyclic oligonucleotide-based antiphage signaling system) provides immunity against bacteriophage. The CD-NTase protein synthesizes cyclic nucleotides in response to infection; these serve as specific second messenger signals. The signals activate a diverse range of effectors, leading to bacterial cell death and thus abortive phage infection. A type III-C(AAA) CBASS system. Functionally, a cyclic nucleotide-activated dsDNase. In the presence of 3',3',3'-cyclic AMP-AMP-AMP (cAAA) and to a lesser extent cyclic-di-AMP (c-di-AMP), endonucleolytically degrades dsDNA. Binds one cAAA in a pocket on one surface of the trimer; cAAA binding promotes hexamerization which is probably necessary for nuclease activation. The nuclease digests dsDNA to about 50 bp lengths. DNA has been modeled to contact a pair of juxtaposed active sites (one from each layer of the hexamer), accounting for cleavage on both strands. The polypeptide is Endodeoxyribonuclease NucC (Pseudomonas aeruginosa).